Reading from the N-terminus, the 594-residue chain is MNELIKHKLELLPDSPGCYLHKDKAGTIIYVGKAKNLRNRVRSYFRGSHDTKTELLVSEIADFEFIVTGSNTEALLLEINLIQENMPKYNIKLKDDKSYPFIKITNEPFPRLLITRQIKKNDGLYFGPYPDAYTATEVKKLLDRIFPFKKCKNPVNKVCFYYHLGQCQAHTICHTDKAYWDSLVADVKQFLNGKDDKIIDDLRSKMLEASHNQEFERAAEYRDLISGIATMRTKQRVMSKDLQDRDIFGYFVDKGWMCVQVFFVRQGKLIQRDVNMFPYYNEAEEDFLTYVGQFYSDQRHLIPKEVFIPETIDETLVAAIVPARIVKPQRGEKKQLVALATKNARVSLQQKFDLLEKDLRKTSGAIEHLGQLLGIEKPVRIEAFDNSNIQGTSPVAAMVVFVDGKPSKKDYRKFKIKTVIGPDDYASMREVIYRRYSRVKHEGLQAPDLIIVDGGQGQVKAARDVIEHQLGLSIPVAGLQKNDKHQTHELLFGNPLAVVELPRNSEEFFLLHRIQDEVHRFAITFHRQVRSKNAFSSKLDHIAGLGPKRKQLLLKRFKSMTALEQASLEEIQQLGIPKTVAEALFDHLTSKSEV.

The GIY-YIG domain maps to 14–91; that stretch reads DSPGCYLHKD…IQENMPKYNI (78 aa). The UVR domain occupies 196 to 231; that stretch reads DKIIDDLRSKMLEASHNQEFERAAEYRDLISGIATM.

Belongs to the UvrC family. As to quaternary structure, interacts with UvrB in an incision complex.

It localises to the cytoplasm. In terms of biological role, the UvrABC repair system catalyzes the recognition and processing of DNA lesions. UvrC both incises the 5' and 3' sides of the lesion. The N-terminal half is responsible for the 3' incision and the C-terminal half is responsible for the 5' incision. The protein is UvrABC system protein C of Streptococcus equi subsp. equi (strain 4047).